Here is a 605-residue protein sequence, read N- to C-terminus: MRIDQSIINEIKDKTDILDLVSEYVKLEKRGRNYIGLCPFHDEKTPSFTVSEDKQICHCFGCKKGGNVFQFTQEIKDISFVEAVKELGDRVNVAVDIEATQSNSNVQIASDDLQMIEMHELIQEFYYYALTKTVEGEQALTYLQERGFTDALIKERGIGFAPDSSHFCHDFLQKKGYDIELAYEAGLLSRNEENFSYYDRFRNRIMFPLKNAQGRIVGYSGRTYTGQEPKYLNSPETPIFQKRKLLYNLDKARKSIRKLDEIVLLEGFMDVIKSDTAGLKNVVATMGTQLSDEHITFIRKLTSNITLMFDGDFAGSEATLKTGQHLLQQGLNVFVIQLPSGMDPDEYIGKYGNDAFTTFVKNDKKSFAHYKVSILKDEIAHNDLSYERYLKELSHDISLMKSSILQQKAINDVAPFFNVSPEQLANEIQFNQAPANYYPEDEYGGYDEYGGYIEPEPIGMAQFDNLSRREKAERAFLKHLMRDKDTFLNYYESVDKDNFTNQHFKYVFEVLHDFYAENDQYNISDAVQYVNSNELRETLISLEQYNLNGEPYENEIDDYVNVINEKGQETIESLNHKLREATRIGDVELQKYYLQQIVAKNKERM.

The segment at 38-62 adopts a CHC2-type zinc-finger fold; the sequence is CPFHDEKTPSFTVSEDKQICHCFGC. The Toprim domain occupies 260–341; that stretch reads DEIVLLEGFM…NVFVIQLPSG (82 aa). Mg(2+) contacts are provided by Glu-266, Asp-310, and Asp-312.

It belongs to the DnaG primase family. Monomer. Interacts with DnaB. Zn(2+) serves as cofactor. Mg(2+) is required as a cofactor.

The catalysed reaction is ssDNA + n NTP = ssDNA/pppN(pN)n-1 hybrid + (n-1) diphosphate.. Functionally, RNA polymerase that catalyzes the synthesis of short RNA molecules used as primers for DNA polymerase during DNA replication. In Staphylococcus aureus, this protein is DNA primase.